Reading from the N-terminus, the 411-residue chain is MQIYLVGGAVRDQLLNLPVKDRDYLVVGATPEQLLAQGYQQVGNDFPVFLHPKTKEEYALARQERKNGVGYNGFLCDFSPDVTLEQDLIRRDLTINAIAQDASGQIFDPYGGKQDLANRLLRHISPAFSEDPLRVLRVARFAARFHSLGFKIAPETVKLMQEMTACGELAHLTAERVWLETQKAFATDNPQIYFEVLREIGALAVLFPEFDRLFGVPQPEQHHPEIDSGVHTLLVIEQAKRLAKNAENPTALLWAALCHDLGKGLTEKDILPHHYGHEVKGVKPARELSNRLKVSTDVKDFAILVTEYHTHCHKMAELRPETVLKVFNALDIWRKPQRFCDFLLACEADARGRLGFENREYPQAELAKWYFKVAAQVDVQAVIQDGFEKKAIREELNKRRITAIKIIKPNV.

ATP is bound by residues G8 and R11. Positions 8 and 11 each coordinate CTP. Residues D21 and D23 each contribute to the Mg(2+) site. Positions 91, 137, and 140 each coordinate ATP. CTP-binding residues include R91, R137, and R140. Residues 228–333 (SGVHTLLVIE…LKVFNALDIW (106 aa)) enclose the HD domain.

Belongs to the tRNA nucleotidyltransferase/poly(A) polymerase family. Bacterial CCA-adding enzyme type 1 subfamily. Monomer. Can also form homodimers and oligomers. The cofactor is Mg(2+). Ni(2+) serves as cofactor.

The enzyme catalyses a tRNA precursor + 2 CTP + ATP = a tRNA with a 3' CCA end + 3 diphosphate. It carries out the reaction a tRNA with a 3' CCA end + 2 CTP + ATP = a tRNA with a 3' CCACCA end + 3 diphosphate. In terms of biological role, catalyzes the addition and repair of the essential 3'-terminal CCA sequence in tRNAs without using a nucleic acid template. Adds these three nucleotides in the order of C, C, and A to the tRNA nucleotide-73, using CTP and ATP as substrates and producing inorganic pyrophosphate. tRNA 3'-terminal CCA addition is required both for tRNA processing and repair. Also involved in tRNA surveillance by mediating tandem CCA addition to generate a CCACCA at the 3' terminus of unstable tRNAs. While stable tRNAs receive only 3'-terminal CCA, unstable tRNAs are marked with CCACCA and rapidly degraded. This is Multifunctional CCA protein from Actinobacillus pleuropneumoniae serotype 5b (strain L20).